The chain runs to 420 residues: MAP kinase-interacting serine/threonine-protein kinase 1 (420 aa).

The disordered stretch occupies residues 1-25 (MGSSEPIPIAESDKRKKKKRKARAT). S27 bears the Phosphoserine; by PAK2 mark. The region spanning 37–321 (KLTSELLGEG…AAQVLQHPWV (285 aa)) is the Protein kinase domain. ATP-binding positions include 43–51 (LGEGANAKV) and K66. D158 functions as the Proton acceptor in the catalytic mechanism. Residues S168 and S173 each carry the phosphoserine modification. Phosphothreonine is present on residues T197, T202, and T332. Residues 386–420 (LSPPSKSRLARRRALAQAGRSGDAPPSPTPTTPAP) are disordered. Positions 400–409 (LAQAGRSGDA) are enriched in low complexity. The segment covering 410-420 (PPSPTPTTPAP) has biased composition (pro residues).

Belongs to the protein kinase superfamily. CAMK Ser/Thr protein kinase family. As to quaternary structure, interacts with the C-terminal regions of EIF4G1 and EIF4G2. Also binds to dephosphorylated ERK1 and ERK2, and to the p38 kinases. Requires Mg(2+) as cofactor. Post-translationally, dual phosphorylation of Thr-197 and Thr-202 activates the kinase. Phosphorylation of Thr-332 activates the kinase. MAPK3/ERK1 is one of the kinases which activate MKNK1/MNK1. Phosphorylation by PAK2 leads to a reduced phosphorylation of EIF4G1.

The catalysed reaction is L-seryl-[protein] + ATP = O-phospho-L-seryl-[protein] + ADP + H(+). It carries out the reaction L-threonyl-[protein] + ATP = O-phospho-L-threonyl-[protein] + ADP + H(+). Phosphorylated and activated by the p38 kinases and kinases in the Erk pathway. May play a role in the response to environmental stress and cytokines. Appears to regulate translation by phosphorylating EIF4E, thus increasing the affinity of this protein for the 7-methylguanosine-containing mRNA cap. The protein is MAP kinase-interacting serine/threonine-protein kinase 1 (MKNK1) of Bos taurus (Bovine).